Reading from the N-terminus, the 665-residue chain is LisH domain-containing protein ARMC9 (665 aa).

The LisH domain occupies 7 to 39 (HESELLGLVKEYLDFAEFEDTLKTFLKECKIKG). Residues 204-235 (QSNKDVLQQLHQQLVEAERRSMTYLKRYNRIQ) adopt a coiled-coil conformation. Serine 582 bears the Phosphoserine mark. A compositionally biased stretch (acidic residues) spans 582–603 (SDDDEDEDDEEDHDTMEADLDK). 2 disordered regions span residues 582–604 (SDDD…LDKD) and 636–665 (RRGT…GYPA).

Interacts with TOGARAM1, CCDC66, CEP104, CSPP1 and CEP290. Interacts with NDUFAF2.

It is found in the cytoplasm. Its subcellular location is the cytoskeleton. It localises to the cilium basal body. The protein resides in the cell projection. The protein localises to the cilium. It is found in the microtubule organizing center. Its subcellular location is the centrosome. It localises to the centriole. In terms of biological role, involved in ciliogenesis. It is required for appropriate acetylation and polyglutamylation of ciliary microtubules, and regulation of cilium length. Acts as a positive regulator of hedgehog (Hh)signaling. May participate in the trafficking and/or retention of GLI2 and GLI3 proteins at the ciliary tip. The sequence is that of LisH domain-containing protein ARMC9 (ARMC9) from Bos taurus (Bovine).